We begin with the raw amino-acid sequence, 196 residues long: Holliday junction branch migration complex subunit RuvA (196 aa).

The domain I stretch occupies residues 1 to 63 (MYDYIKGTLV…DDAHLLFGFH (63 aa)). Residues 64–142 (TEDEKEVFLK…ELPAETTNTT (79 aa)) form a domain II region. Residues 143 to 146 (ANQT) are flexible linker. Positions 147–196 (AGNQQLDEAMEALLALGYKATELKKVKAFFEDTNETAEQYIKSALKMLMK) are domain III.

This sequence belongs to the RuvA family. As to quaternary structure, homotetramer. Forms an RuvA(8)-RuvB(12)-Holliday junction (HJ) complex. HJ DNA is sandwiched between 2 RuvA tetramers; dsDNA enters through RuvA and exits via RuvB. An RuvB hexamer assembles on each DNA strand where it exits the tetramer. Each RuvB hexamer is contacted by two RuvA subunits (via domain III) on 2 adjacent RuvB subunits; this complex drives branch migration. In the full resolvosome a probable DNA-RuvA(4)-RuvB(12)-RuvC(2) complex forms which resolves the HJ.

It localises to the cytoplasm. The RuvA-RuvB-RuvC complex processes Holliday junction (HJ) DNA during genetic recombination and DNA repair, while the RuvA-RuvB complex plays an important role in the rescue of blocked DNA replication forks via replication fork reversal (RFR). RuvA specifically binds to HJ cruciform DNA, conferring on it an open structure. The RuvB hexamer acts as an ATP-dependent pump, pulling dsDNA into and through the RuvAB complex. HJ branch migration allows RuvC to scan DNA until it finds its consensus sequence, where it cleaves and resolves the cruciform DNA. The chain is Holliday junction branch migration complex subunit RuvA from Streptococcus thermophilus (strain ATCC BAA-491 / LMD-9).